The chain runs to 186 residues: UPF0301 protein NTHI0415 (186 aa).

Belongs to the UPF0301 (AlgH) family.

This is UPF0301 protein NTHI0415 from Haemophilus influenzae (strain 86-028NP).